Reading from the N-terminus, the 115-residue chain is Tyrosine-protein phosphatase 22 (115 aa).

The region spanning 1 to 115 (WLMIVEQKCR…ETGGDAPMVV (115 aa)) is the Tyrosine-protein phosphatase domain. D83 lines the substrate pocket.

It belongs to the protein-tyrosine phosphatase family.

The enzyme catalyses O-phospho-L-tyrosyl-[protein] + H2O = L-tyrosyl-[protein] + phosphate. The polypeptide is Tyrosine-protein phosphatase 22 (STY-22) (Styela plicata (Wrinkled sea squirt)).